We begin with the raw amino-acid sequence, 1402 residues long: DNA-directed RNA polymerase subunit beta' (1402 aa).

Zn(2+) is bound by residues Cys-71, Cys-73, Cys-86, and Cys-89. Residues Asp-462, Asp-464, and Asp-466 each coordinate Mg(2+). Cys-811, Cys-885, Cys-892, and Cys-895 together coordinate Zn(2+).

Belongs to the RNA polymerase beta' chain family. The RNAP catalytic core consists of 2 alpha, 1 beta, 1 beta' and 1 omega subunit. When a sigma factor is associated with the core the holoenzyme is formed, which can initiate transcription. Requires Mg(2+) as cofactor. The cofactor is Zn(2+).

It catalyses the reaction RNA(n) + a ribonucleoside 5'-triphosphate = RNA(n+1) + diphosphate. DNA-dependent RNA polymerase catalyzes the transcription of DNA into RNA using the four ribonucleoside triphosphates as substrates. This Rhizobium etli (strain ATCC 51251 / DSM 11541 / JCM 21823 / NBRC 15573 / CFN 42) protein is DNA-directed RNA polymerase subunit beta'.